Here is a 484-residue protein sequence, read N- to C-terminus: Endoglucanase 3 (484 aa).

The N-terminal stretch at 1 to 21 is a signal peptide; that stretch reads MASPFFFVFLLSALSLENTYA. Asp77 serves as the catalytic Nucleophile. Asn370 carries an N-linked (GlcNAc...) asparagine glycan. Catalysis depends on residues His402, Asp453, and Glu462.

It belongs to the glycosyl hydrolase 9 (cellulase E) family. Specifically expressed in root cap cells.

It localises to the secreted. It catalyses the reaction Endohydrolysis of (1-&gt;4)-beta-D-glucosidic linkages in cellulose, lichenin and cereal beta-D-glucans.. Its function is as follows. May be involved in the sloughing (cell-cell separation) of the root cap cells from root tip. This is Endoglucanase 3 (CEL5) from Arabidopsis thaliana (Mouse-ear cress).